The chain runs to 2202 residues: Activating signal cointegrator 1 complex subunit 3 (2202 aa).

A required for interaction with ASCC2 region spans residues M1 to I400. At S12 the chain carries Phosphoserine. 2 coiled-coil regions span residues K18–Q79 and I328–E356. The Helicase ATP-binding 1 domain occupies E486–L669. A499–T506 is an ATP binding site. The residue at position 572 (K572) is an N6-acetyllysine. A DEVH box motif is present at residues D611 to H614. In terms of domain architecture, Helicase C-terminal 1 spans T728–V914. Residues S978 to F1287 enclose the SEC63 1 domain. The region spanning H1336–F1511 is the Helicase ATP-binding 2 domain. A1349–T1356 contacts ATP. A DEIH box motif is present at residues D1453–H1456. One can recognise a Helicase C-terminal 2 domain in the interval P1544–I1739. The SEC63 2 domain maps to P1812–Y2176. The residue at position 2195 (S2195) is a Phosphoserine.

The protein belongs to the helicase family. As to quaternary structure, identified in the ASCC complex that contains ASCC1, ASCC2 and ASCC3. Functions as scaffolding subunit that interacts directly with both ASCC1 and ASCC2. Interacts directly with ALKBH3, and thereby recruits ALKBH3 to the ASCC complex. Part of the ASC-1/TRIP4 complex, that contains TRIP4, ASCC1, ASCC2 and ASCC3. Part of the RQT (ribosome quality control trigger) complex, that contains ASCC2, ASCC3 and TRIP4. Associates with ribosomes; recruited to collided ribosomes. Interacts with ZCCHC4. Interacts with ZNF598. Interacts with RPS3. In terms of tissue distribution, ubiquitous.

The protein resides in the nucleus. The protein localises to the nucleus speckle. It localises to the cytoplasm. It is found in the cytosol. It catalyses the reaction Couples ATP hydrolysis with the unwinding of duplex DNA by translocating in the 3'-5' direction.. It carries out the reaction ATP + H2O = ADP + phosphate + H(+). Functionally, ATPase involved both in DNA repair and rescue of stalled ribosomes. 3'-5' DNA helicase involved in repair of alkylated DNA: promotes DNA unwinding to generate single-stranded substrate needed for ALKBH3, enabling ALKBH3 to process alkylated N3-methylcytosine (3mC) within double-stranded regions. Also involved in activation of the ribosome quality control (RQC) pathway, a pathway that degrades nascent peptide chains during problematic translation. Drives the splitting of stalled ribosomes that are ubiquitinated in a ZNF598-dependent manner, as part of the ribosome quality control trigger (RQT) complex. Part of the ASC-1 complex that enhances NF-kappa-B, SRF and AP1 transactivation. The chain is Activating signal cointegrator 1 complex subunit 3 (ASCC3) from Homo sapiens (Human).